The following is a 189-amino-acid chain: Photosystem I assembly protein Ycf4 (189 aa).

A run of 2 helical transmembrane segments spans residues 29–49 (WATI…SSYL) and 69–89 (LVMG…WLVI).

Belongs to the Ycf4 family.

The protein localises to the cellular thylakoid membrane. In terms of biological role, seems to be required for the assembly of the photosystem I complex. The sequence is that of Photosystem I assembly protein Ycf4 from Nostoc punctiforme (strain ATCC 29133 / PCC 73102).